Consider the following 1041-residue polypeptide: Probable rhamnogalacturonate lyase C (1041 aa).

The N-terminal stretch at 1–21 (MFASTLRKTFVFLGLATYSAA) is a signal peptide. 8 N-linked (GlcNAc...) asparagine glycosylation sites follow: asparagine 28, asparagine 94, asparagine 116, asparagine 142, asparagine 231, asparagine 283, asparagine 528, and asparagine 634. The disordered stretch occupies residues 703 to 728 (ISRPCPRKGGTRRRKKERKKEGKKQG). Basic residues predominate over residues 707–720 (CPRKGGTRRRKKER). N-linked (GlcNAc...) asparagine glycosylation is present at asparagine 864.

It belongs to the polysaccharide lyase 4 family.

It localises to the secreted. The enzyme catalyses Endotype eliminative cleavage of L-alpha-rhamnopyranosyl-(1-&gt;4)-alpha-D-galactopyranosyluronic acid bonds of rhamnogalacturonan I domains in ramified hairy regions of pectin leaving L-rhamnopyranose at the reducing end and 4-deoxy-4,5-unsaturated D-galactopyranosyluronic acid at the non-reducing end.. In terms of biological role, pectinolytic enzymes consist of four classes of enzymes: pectin lyase, polygalacturonase, pectin methylesterase and rhamnogalacturonase. Degrades the rhamnogalacturonan I (RG-I) backbone of pectin. This chain is Probable rhamnogalacturonate lyase C (rglC), found in Emericella nidulans (strain FGSC A4 / ATCC 38163 / CBS 112.46 / NRRL 194 / M139) (Aspergillus nidulans).